The primary structure comprises 149 residues: UPF0179 protein MA_3685 (149 aa).

This sequence belongs to the UPF0179 family.

The chain is UPF0179 protein MA_3685 from Methanosarcina acetivorans (strain ATCC 35395 / DSM 2834 / JCM 12185 / C2A).